Here is a 71-residue protein sequence, read N- to C-terminus: MYKDYLFKSNKGYLSLTLVTLPVCSSLHCYFLWTTLSRLSSLPIDVPRSVCSVASLDLDLVIINLLSILRD.

Residues G12 to T34 traverse the membrane as a helical segment.

Its subcellular location is the membrane. This is an uncharacterized protein from Dictyostelium discoideum (Social amoeba).